Reading from the N-terminus, the 37-residue chain is Beta-2-microglobulin (37 aa).

The 27-residue stretch at 11 to 37 (GKEDVLICHVSNFHPPDITITLLKNGE) folds into the Ig-like C1-type domain.

It belongs to the beta-2-microglobulin family. Heterodimer of an alpha chain and a beta chain. Beta-2-microglobulin is the beta-chain of major histocompatibility complex class I molecules.

The protein resides in the secreted. Component of the class I major histocompatibility complex (MHC). Involved in the presentation of peptide antigens to the immune system. In Oreochromis niloticus (Nile tilapia), this protein is Beta-2-microglobulin (b2m).